Consider the following 372-residue polypeptide: GDP-mannose 4,6 dehydratase (372 aa).

Positions 1-22 are disordered; it reads MAHAPASCPSSRNSGDGDKGKP. The residue at position 2 (Ala-2) is an N-acetylalanine. NADP(+)-binding positions include 30-35, 55-58, 86-87, 108-112, and Tyr-123; these read GITGQD, RRSS, DL, and LGAQS. Thr-155 is a catalytic residue. Residues Glu-157 and Tyr-179 each act as nucleophile in the active site. NADP(+) contacts are provided by Lys-183, His-209, and Arg-214. Tyr-323 bears the Phosphotyrosine mark.

The protein belongs to the NAD(P)-dependent epimerase/dehydratase family. GDP-mannose 4,6-dehydratase subfamily. NADP(+) is required as a cofactor.

It catalyses the reaction GDP-alpha-D-mannose = GDP-4-dehydro-alpha-D-rhamnose + H2O. The protein operates within nucleotide-sugar biosynthesis; GDP-L-fucose biosynthesis via de novo pathway; GDP-L-fucose from GDP-alpha-D-mannose: step 1/2. With respect to regulation, inhibited by GDP-fucose. Catalyzes the conversion of GDP-D-mannose to GDP-4-dehydro-6-deoxy-D-mannose. The chain is GDP-mannose 4,6 dehydratase (GMDS) from Cricetulus griseus (Chinese hamster).